A 325-amino-acid chain; its full sequence is Glutarate 2-hydroxylase (325 aa).

The Fe cation site is built by histidine 160, aspartate 162, and histidine 292.

The protein belongs to the glutarate hydroxylase family. In terms of assembly, homotetramer. Requires Fe(2+) as cofactor.

It catalyses the reaction glutarate + 2-oxoglutarate + O2 = (S)-2-hydroxyglutarate + succinate + CO2. The protein operates within amino-acid degradation. Acts as an alpha-ketoglutarate-dependent dioxygenase catalyzing hydroxylation of glutarate (GA) to L-2-hydroxyglutarate (L2HG). Functions in a L-lysine degradation pathway that proceeds via cadaverine, glutarate and L-2-hydroxyglutarate. This is Glutarate 2-hydroxylase from Escherichia coli O6:H1 (strain CFT073 / ATCC 700928 / UPEC).